A 214-amino-acid polypeptide reads, in one-letter code: Ceramide-1-phosphate transfer protein (214 aa).

Residues Asp56, Lys60, Arg106, Arg110, and His150 each coordinate an N-acylsphingoid base 1-phosphate.

The protein belongs to the GLTP family. Ubiquitous. Detected in heart, brain, placenta, lung, liver, skeletal muscle, kidney, pancreas, spleen, thymus, prostate, testis, ovary, small intestine, colon and peripheral blood leukocytes.

Its subcellular location is the cytoplasm. It localises to the cytosol. It is found in the golgi apparatus. The protein localises to the trans-Golgi network membrane. The protein resides in the cell membrane. Its subcellular location is the endosome membrane. It localises to the nucleus outer membrane. It catalyses the reaction N-(hexadecanoyl)-sphing-4-enine-1-phosphate(in) = N-(hexadecanoyl)-sphing-4-enine-1-phosphate(out). It carries out the reaction N-(9Z-octadecenoyl)-sphing-4-enine-1-phosphate(in) = N-(9Z-octadecenoyl)-sphing-4-enine-1-phosphate(out). Its function is as follows. Mediates the intracellular transfer of ceramide-1-phosphate (C1P) between organelle membranes and the cell membrane. Required for normal structure of the Golgi stacks. Can bind phosphoceramides with a variety of aliphatic chains, but has a preference for lipids with saturated C16:0 or monounsaturated C18:1 aliphatic chains, and is inefficient with phosphoceramides containing lignoceryl (C24:0). Plays a role in the regulation of the cellular levels of ceramide-1-phosphate, and thereby contributes to the regulation of phospholipase PLA2G4A activity and the release of arachidonic acid. Has no activity with galactosylceramide, lactosylceramide, sphingomyelin, phosphatidylcholine, phosphatidic acid and ceramide. C1P transfer is stimulated by phosphatidylserine in C1P source vesicles. Regulates autophagy, inflammasome mediated IL1B and IL18 processing, and pyroptosis, but not apoptosis. The protein is Ceramide-1-phosphate transfer protein of Homo sapiens (Human).